The chain runs to 129 residues: Small ribosomal subunit protein uS11 (129 aa).

The protein belongs to the universal ribosomal protein uS11 family. In terms of assembly, part of the 30S ribosomal subunit. Interacts with proteins S7 and S18. Binds to IF-3.

Functionally, located on the platform of the 30S subunit, it bridges several disparate RNA helices of the 16S rRNA. Forms part of the Shine-Dalgarno cleft in the 70S ribosome. In Mycoplasma mycoides subsp. mycoides SC (strain CCUG 32753 / NCTC 10114 / PG1), this protein is Small ribosomal subunit protein uS11.